The following is a 475-amino-acid chain: Ribulose bisphosphate carboxylase large chain (475 aa).

A propeptide spanning residues 1-2 (MS) is cleaved from the precursor. Pro-3 bears the N-acetylproline mark. Position 14 is an N6,N6,N6-trimethyllysine (Lys-14). The substrate site is built by Asn-123 and Thr-173. The Proton acceptor role is filled by Lys-175. Lys-177 contacts substrate. Positions 201, 203, and 204 each coordinate Mg(2+). N6-carboxylysine is present on Lys-201. His-294 acts as the Proton acceptor in catalysis. Substrate contacts are provided by Arg-295, His-327, and Ser-379.

Belongs to the RuBisCO large chain family. Type I subfamily. As to quaternary structure, heterohexadecamer of 8 large chains and 8 small chains; disulfide-linked. The disulfide link is formed within the large subunit homodimers. Mg(2+) serves as cofactor. The disulfide bond which can form in the large chain dimeric partners within the hexadecamer appears to be associated with oxidative stress and protein turnover.

Its subcellular location is the plastid. The protein resides in the chloroplast. It carries out the reaction 2 (2R)-3-phosphoglycerate + 2 H(+) = D-ribulose 1,5-bisphosphate + CO2 + H2O. The catalysed reaction is D-ribulose 1,5-bisphosphate + O2 = 2-phosphoglycolate + (2R)-3-phosphoglycerate + 2 H(+). Its function is as follows. RuBisCO catalyzes two reactions: the carboxylation of D-ribulose 1,5-bisphosphate, the primary event in carbon dioxide fixation, as well as the oxidative fragmentation of the pentose substrate in the photorespiration process. Both reactions occur simultaneously and in competition at the same active site. The chain is Ribulose bisphosphate carboxylase large chain from Cycas taitungensis (Prince sago).